A 169-amino-acid chain; its full sequence is Tumor suppressor ARF (169 aa).

An interaction with CDK5RAP3 and MDM2 region spans residues 1–63 (MGRRFLVTVR…RRGPHRNPGP (63 aa)). Residues 54–73 (RRGPHRNPGPGDDDGQRSRS) are disordered.

Does not interact with cyclins, CDK1, CDK2, CDK4, CDK5 or CDK6. Interacts with COMMD1. Binds to BCL6, E2F1, HUWE1, MDM2, MYC, NPM1/B23, TOP1/TOPOI and UBE2I/UBC9. Interacts with TBRG1. Interacts with CDKN2AIP and E4F1. Interacts with CDK5RAP3 and MDM2; form a ternary complex involved in regulation of p53/TP53. Interacts with NOP53; the interaction is direct and promotes ARF nucleoplasmic relocalization and ubiquitin-mediated proteasomal degradation. Interacts with TTF1 (via the N-terminal region (NRD) and a C-terminal region); the interaction is direct and inhibits the nucleolar localization of TTF1. As to quaternary structure, interacts with C1QBP. In terms of processing, ubiquitinated in normal cells by TRIP12 via the ubiquitin fusion degradation (UFD) pathway, a process that mediates ubiquitination at the N-terminus, regardless of the absence of lysine residues. Ubiquitination leads to its proteasomal degradation. In cancer cells, however, TRIP12 is located in a different cell compartment, preventing ubiquitination and degradation.

It is found in the nucleus. It localises to the nucleolus. The protein localises to the nucleoplasm. Its subcellular location is the mitochondrion. Capable of inducing cell cycle arrest in G1 and G2 phases. Acts as a tumor suppressor. Binds to MDM2 and blocks its nucleocytoplasmic shuttling by sequestering it in the nucleolus. This inhibits the oncogenic action of MDM2 by blocking MDM2-induced degradation of p53 and enhancing p53-dependent transactivation and apoptosis. Also induces G2 arrest and apoptosis in a p53-independent manner by preventing the activation of cyclin B1/CDC2 complexes. Binds to BCL6 and down-regulates BCL6-induced transcriptional repression. Binds to E2F1 and MYC and blocks their transcriptional activator activity but has no effect on MYC transcriptional repression. Binds to TOP1/TOPOI and stimulates its activity. This complex binds to rRNA gene promoters and may play a role in rRNA transcription and/or maturation. Interacts with NPM1/B23 and promotes its polyubiquitination and degradation, thus inhibiting rRNA processing. Plays a role in inhibiting ribosome biogenesis, perhaps by binding to the nucleolar localization sequence of transcription termination factor TTF1, and thereby preventing nucleolar localization of TTF1. Interacts with COMMD1 and promotes its 'Lys63'-linked polyubiquitination. Interacts with UBE2I/UBC9 and enhances sumoylation of a number of its binding partners including MDM2 and E2F1. Binds to HUWE1 and represses its ubiquitin ligase activity. May play a role in controlling cell proliferation and apoptosis during mammary gland development. Functionally, may be involved in regulation of autophagy and caspase-independent cell death; the short-lived mitochondrial isoform is stabilized by C1QBP. The polypeptide is Tumor suppressor ARF (Mus musculus (Mouse)).